The following is a 64-amino-acid chain: Ribosome biogenesis protein Nop10 (64 aa).

This sequence belongs to the NOP10 family.

Involved in ribosome biogenesis; more specifically in 18S rRNA pseudouridylation and in cleavage of pre-rRNA. In Ignicoccus hospitalis (strain KIN4/I / DSM 18386 / JCM 14125), this protein is Ribosome biogenesis protein Nop10.